We begin with the raw amino-acid sequence, 206 residues long: Small ribosomal subunit protein uS4 (206 aa).

Residues 96–156 (CRLDNVVYRM…EKAKNQLRIV (61 aa)) enclose the S4 RNA-binding domain.

The protein belongs to the universal ribosomal protein uS4 family. As to quaternary structure, part of the 30S ribosomal subunit. Contacts protein S5. The interaction surface between S4 and S5 is involved in control of translational fidelity.

Its function is as follows. One of the primary rRNA binding proteins, it binds directly to 16S rRNA where it nucleates assembly of the body of the 30S subunit. In terms of biological role, with S5 and S12 plays an important role in translational accuracy. The chain is Small ribosomal subunit protein uS4 from Pseudomonas fluorescens (strain SBW25).